We begin with the raw amino-acid sequence, 111 residues long: UPF0060 membrane protein Ajs_1473 (111 aa).

4 helical membrane passes run 8-28 (ILFAVTAVAEIVGCYLPWLVV), 33-53 (SAWLLLPAAVSLSLFAWLLTL), 65-85 (YGGMYIAVALVWLHVVDGVAL), and 88-108 (WDFVGAAIALAGMSVIALQPA).

The protein belongs to the UPF0060 family.

The protein resides in the cell inner membrane. The sequence is that of UPF0060 membrane protein Ajs_1473 from Acidovorax sp. (strain JS42).